Consider the following 461-residue polypeptide: Ig heavy chain C region, membrane-bound form (461 aa).

Residues Ala1–Pro99 form a CH1 region. A CH2 region spans residues Asp100–Gln205. N-linked (GlcNAc...) asparagine glycans are attached at residues Asn164, Asn200, Asn245, Asn275, Asn374, Asn411, Asn415, and Asn437. Residues Val206–Glu308 form a CH3 region. Positions Val309–Ser418 are CH4. Residues Ala438–Val458 form a helical membrane-spanning segment.

It is found in the cell membrane. The chain is Ig heavy chain C region, membrane-bound form from Heterodontus francisci (Horn shark).